The sequence spans 856 residues: V-type proton ATPase 116 kDa subunit a 2 (856 aa).

Residues 1–393 (MGSLFRSESM…DAYGVGSYRE (393 aa)) lie on the Cytoplasmic side of the membrane. Residues 394-412 (VNPALFTIITFPFLFAVMF) traverse the membrane as a helical segment. The Vacuolar segment spans residues 413-414 (GD). A helical membrane pass occupies residues 415–431 (FGHGFVMFLFALLLVLN). Over 432–445 (ENHPRLSQSQEILR) the chain is Cytoplasmic. A helical transmembrane segment spans residues 446–475 (MFFDGRYILLLMGLFSVYTGLIYNDCFSKS). Residues 476–549 (VNLFGSGWNV…ATNRLTFLNS (74 aa)) lie on the Vacuolar side of the membrane. The helical transmembrane segment at 550-569 (FKMKMSVILGIFHMTFGVVL) threads the bilayer. The Cytoplasmic segment spans residues 570-587 (GIFNHLHFRKKFNVYLVS). A helical membrane pass occupies residues 588–608 (VPEILFMLCIFGYLIFMIIYK). Topologically, residues 609–651 (WLAYSAETSREAPSILIEFINMFLFPTSKTHGLYPGQAHVQRV) are vacuolar. The chain crosses the membrane as a helical span at residues 652–671 (LVALTVLAVPVLFLGKPLFL). Residues 672–739 (LWLHNGRNCF…EILMTQAIHS (68 aa)) are Cytoplasmic-facing. Serine 695 and serine 700 each carry phosphoserine. A helical transmembrane segment spans residues 740–764 (IEYCLGCISNTASYLRLWALSLAHA). Residues 765 to 785 (QLSDVLWAMLMRVGLRVDTTY) are Vacuolar-facing. The chain crosses the membrane as a helical span at residues 786–824 (GVLLLLPVMAFFAVLTIFILLVMEGLSAFLHAIRLHWVE). At 825–856 (FQNKFYVGAGTKFVPFSFSLLSSKFSNDDSIA) the chain is on the cytoplasmic side.

It belongs to the V-ATPase 116 kDa subunit family. In terms of assembly, V-ATPase is a heteromultimeric enzyme made up of two complexes: the ATP-hydrolytic V1 complex and the proton translocation V0 complex. The V1 complex consists of three catalytic AB heterodimers that form a heterohexamer, three peripheral stalks each consisting of EG heterodimers, one central rotor including subunits D and F, and the regulatory subunits C and H. The proton translocation complex V0 consists of the proton transport subunit a, a ring of proteolipid subunits c9c'', rotary subunit d, subunits e and f, and the accessory subunits ATP6AP1/Ac45 and ATP6AP2/PRR. Directly interacts with PSCD2 through its N-terminal cytosolic tail in an intra-endosomal acidification-dependent manner. Disruption of this interaction results in the inhibition of endocytosis. Interacts with SPAAR. Relatively high expression in kidney and liver. Lower levels in the spleen, testis, and skeletal muscle. Also expressed in the thymus.

The protein localises to the cell membrane. The protein resides in the endosome membrane. Subunit of the V0 complex of vacuolar(H+)-ATPase (V-ATPase), a multisubunit enzyme composed of a peripheral complex (V1) that hydrolyzes ATP and a membrane integral complex (V0) that translocates protons. V-ATPase is responsible for acidifying and maintaining the pH of intracellular compartments and in some cell types, is targeted to the plasma membrane, where it is responsible for acidifying the extracellular environment. Essential component of the endosomal pH-sensing machinery. May play a role in maintaining the Golgi functions, such as glycosylation maturation, by controlling the Golgi pH. In aerobic conditions, involved in intracellular iron homeostasis, thus triggering the activity of Fe(2+) prolyl hydroxylase (PHD) enzymes, and leading to HIF1A hydroxylation and subsequent proteasomal degradation. This is V-type proton ATPase 116 kDa subunit a 2 (Atp6v0a2) from Mus musculus (Mouse).